The chain runs to 309 residues: MDYMLNISTNITRKILETLWNYGCDLFLNEELADHVNFKLGGKVPLFAIPNSTNGFIETINLLNKEGIEFRIIGRGTNILPVDEPLPYVVVSTERMDDVFVDNEKIQVGAGLSFKKLCLVALENELSGFENAFGLPGSVGGAVYMNAGCYGWETAENIVEVVAFDGKDIIKLGKNEIGFGYRTSIFKSEKNLIILQATFKLKKGNKNEIYNLMLETMKKRYEKQPLEFPSAGSVFKRPRPDFYVGTAIESLGLKGFSIGGAQISEKHAGFIINKGGAKAEDVLKLIEYVKDKVREKYNVELETEIEIWK.

One can recognise an FAD-binding PCMH-type domain in the interval 40 to 204 (LGGKVPLFAI…LQATFKLKKG (165 aa)). Arginine 182 is an active-site residue. The active-site Proton donor is the serine 233. Glutamate 304 is a catalytic residue.

Belongs to the MurB family. It depends on FAD as a cofactor.

It localises to the cytoplasm. It carries out the reaction UDP-N-acetyl-alpha-D-muramate + NADP(+) = UDP-N-acetyl-3-O-(1-carboxyvinyl)-alpha-D-glucosamine + NADPH + H(+). It participates in cell wall biogenesis; peptidoglycan biosynthesis. Cell wall formation. In Fervidobacterium nodosum (strain ATCC 35602 / DSM 5306 / Rt17-B1), this protein is UDP-N-acetylenolpyruvoylglucosamine reductase.